Reading from the N-terminus, the 252-residue chain is Small ribosomal subunit protein eS4 (252 aa).

The S4 RNA-binding domain occupies 43-105 (FPLLIIVRDI…TGETYRVIPV (63 aa)).

It belongs to the eukaryotic ribosomal protein eS4 family.

This chain is Small ribosomal subunit protein eS4, found in Staphylothermus marinus (strain ATCC 43588 / DSM 3639 / JCM 9404 / F1).